Here is a 491-residue protein sequence, read N- to C-terminus: Cytosolic Fe-S cluster assembly factor NAR1 (491 aa).

[4Fe-4S] cluster contacts are provided by C20, C65, C68, C71, C177, C232, C414, and C418.

Belongs to the NARF family.

Functionally, component of the cytosolic Fe/S protein assembly machinery. Required for maturation of extramitochondrial Fe/S proteins. May play a role in the transfer of pre-assembled Fe/S clusters to target apoproteins. The chain is Cytosolic Fe-S cluster assembly factor NAR1 (NAR1) from Yarrowia lipolytica (strain CLIB 122 / E 150) (Yeast).